Here is a 328-residue protein sequence, read N- to C-terminus: Phenylalanine--tRNA ligase alpha subunit (328 aa).

Glu-245 lines the Mg(2+) pocket.

The protein belongs to the class-II aminoacyl-tRNA synthetase family. Phe-tRNA synthetase alpha subunit type 1 subfamily. In terms of assembly, tetramer of two alpha and two beta subunits. Mg(2+) is required as a cofactor.

The protein resides in the cytoplasm. The catalysed reaction is tRNA(Phe) + L-phenylalanine + ATP = L-phenylalanyl-tRNA(Phe) + AMP + diphosphate + H(+). This Helicobacter pylori (strain HPAG1) protein is Phenylalanine--tRNA ligase alpha subunit.